A 329-amino-acid chain; its full sequence is Uroporphyrinogen decarboxylase (329 aa).

Residues 22 to 26 (RQVGR), Asp71, Tyr140, Ser195, and His307 each bind substrate.

Belongs to the uroporphyrinogen decarboxylase family. Homodimer.

Its subcellular location is the cytoplasm. The catalysed reaction is uroporphyrinogen III + 4 H(+) = coproporphyrinogen III + 4 CO2. The protein operates within porphyrin-containing compound metabolism; protoporphyrin-IX biosynthesis; coproporphyrinogen-III from 5-aminolevulinate: step 4/4. Functionally, catalyzes the decarboxylation of four acetate groups of uroporphyrinogen-III to yield coproporphyrinogen-III. In Chlamydia pneumoniae (Chlamydophila pneumoniae), this protein is Uroporphyrinogen decarboxylase.